Consider the following 263-residue polypeptide: 3-methyl-2-oxobutanoate hydroxymethyltransferase (263 aa).

Residues Asp-43 and Asp-82 each coordinate Mg(2+). Residues 43–44 (DS), Asp-82, and Lys-111 contribute to the 3-methyl-2-oxobutanoate site. Glu-113 contacts Mg(2+). Glu-179 serves as the catalytic Proton acceptor.

The protein belongs to the PanB family. In terms of assembly, homodecamer; pentamer of dimers. The cofactor is Mg(2+).

It localises to the cytoplasm. The catalysed reaction is 3-methyl-2-oxobutanoate + (6R)-5,10-methylene-5,6,7,8-tetrahydrofolate + H2O = 2-dehydropantoate + (6S)-5,6,7,8-tetrahydrofolate. Its pathway is cofactor biosynthesis; (R)-pantothenate biosynthesis; (R)-pantoate from 3-methyl-2-oxobutanoate: step 1/2. In terms of biological role, catalyzes the reversible reaction in which hydroxymethyl group from 5,10-methylenetetrahydrofolate is transferred onto alpha-ketoisovalerate to form ketopantoate. The polypeptide is 3-methyl-2-oxobutanoate hydroxymethyltransferase (Neisseria meningitidis serogroup B (strain ATCC BAA-335 / MC58)).